The following is a 354-amino-acid chain: Uroporphyrinogen decarboxylase (354 aa).

Substrate contacts are provided by residues 27-31 (RQAGR), D77, Y154, T209, and H327.

The protein belongs to the uroporphyrinogen decarboxylase family. Homodimer.

The protein resides in the cytoplasm. It catalyses the reaction uroporphyrinogen III + 4 H(+) = coproporphyrinogen III + 4 CO2. It functions in the pathway porphyrin-containing compound metabolism; protoporphyrin-IX biosynthesis; coproporphyrinogen-III from 5-aminolevulinate: step 4/4. Its function is as follows. Catalyzes the decarboxylation of four acetate groups of uroporphyrinogen-III to yield coproporphyrinogen-III. The polypeptide is Uroporphyrinogen decarboxylase (Shigella flexneri serotype 5b (strain 8401)).